Reading from the N-terminus, the 237-residue chain is Survival of motor neuron-related-splicing factor 30 (237 aa).

A compositionally biased stretch (polar residues) spans 52-69 (SQPAEGTTSTKSSETVAP). 2 disordered regions span residues 52–73 (SQPA…SHSW) and 149–198 (REYK…RSIF). Residues 72-132 (SWRVGDHCMA…KKVEEGRIRD (61 aa)) enclose the Tudor domain. The Nuclear localization signal motif lies at 142–160 (KELQAEQREYKKKKAQKKV). A compositionally biased stretch (basic residues) spans 151-161 (YKKKKAQKKVQ). Basic and acidic residues predominate over residues 162–175 (RMKELEQEREDQKS). A compositionally biased stretch (polar residues) spans 176 to 185 (KWQQFNNKAY).

It belongs to the SMN family. In terms of assembly, associates with spliceosomes.

The protein localises to the nucleus speckle. It is found in the nucleus. Its subcellular location is the cajal body. Involved in spliceosome assembly. The sequence is that of Survival of motor neuron-related-splicing factor 30 (smndc1) from Danio rerio (Zebrafish).